Here is a 563-residue protein sequence, read N- to C-terminus: L-lactate permease (563 aa).

14 helical membrane-spanning segments follow: residues 14-34, 37-57, 73-93, 131-151, 157-177, 194-214, 220-240, 249-269, 304-324, 381-401, 419-439, 448-468, 506-526, and 542-562; these read LLLS…ALAI, MKGY…AVLV, AVYG…LYKI, GAAG…GLGF, AGIC…GIPI, MVGR…IIIM, ALEI…VQYL, LPDV…LKWW, IFKA…WGIP, LGSA…ITAI, LPIL…SSGM, ALTG…GVFI, VTGK…VGLA, and FLLL…SWMI.

The protein belongs to the lactate permease family.

It localises to the cell membrane. Functionally, is the principal permease for the uptake of L-lactate in B.subtilis. The protein is L-lactate permease (lutP) of Bacillus subtilis (strain 168).